The following is a 146-amino-acid chain: uncharacterized protein (146 aa).

The chain crosses the membrane as a helical span at residues 7 to 27 (FVLSITIVLVILIIIAFIWYN).

The protein belongs to the asfivirus E146L family.

The protein localises to the host membrane. The protein resides in the virion. This is an uncharacterized protein from Ornithodoros (relapsing fever ticks).